The primary structure comprises 413 residues: Palmitoyltransferase ZDHHC6 (413 aa).

Topologically, residues 1 to 24 (MGIFCSVIKFENLQDLRRLCHWGP) are cytoplasmic. A helical transmembrane segment spans residues 25 to 45 (IIALGVIAICSTMAMIDSVLW). The Lumenal portion of the chain corresponds to 46 to 57 (YWPLHTTGGSVN). Residues 58–78 (FIMLINWTVMILYNYFNAMFA) form a helical membrane-spanning segment. Residues 79–143 (GPGFVPRGWK…NCCGHQNHAS (65 aa)) lie on the Cytoplasmic side of the membrane. Positions 99 to 149 (QYCKVCQAYKAPRSHHCRKCNRCVMKMDHHCPWINNCCGHQNHASFTLFLL) constitute a DHHC domain. Cysteine 129 serves as the catalytic S-palmitoyl cysteine intermediate. Residues 144 to 164 (FTLFLLLAPLGCTHAAFIFVM) traverse the membrane as a helical segment. At 165–194 (TMYTQLYNRLSFGWNTVKIDMSAARRDPPP) the chain is on the lumenal side. A helical membrane pass occupies residues 195-215 (IVPFGLAAFAATLFALGLALG). Topologically, residues 216 to 413 (TTIAVGMLFF…PAPEGEKKNR (198 aa)) are cytoplasmic. The region spanning 313–398 (VRSVRYKVIE…PRNCVEKCPC (86 aa)) is the SH3 domain. S-palmitoyl cysteine attachment occurs at residues cysteine 328, cysteine 329, and cysteine 343. A Di-lysine motif motif is present at residues 410 to 413 (KKNR).

Belongs to the DHHC palmitoyltransferase family. Homooligomerizes. Interacts with SELENOK. Palmitoylated at 3 different sites by ZDHHC16. The combination of the different palmitoylation events strongly affects the quaternary assembly of ZDHHC6, its localization, stability and function. Palmitoylation at Cys-328 accelerates the turnover of ZDHHC6. Depalmitoylated by LYPLA2.

The protein localises to the endoplasmic reticulum membrane. The catalysed reaction is L-cysteinyl-[protein] + hexadecanoyl-CoA = S-hexadecanoyl-L-cysteinyl-[protein] + CoA. It catalyses the reaction L-cysteinyl-[protein] + octadecanoyl-CoA = S-octadecanoyl-L-cysteinyl-[protein] + CoA. Functionally, endoplasmic reticulum palmitoyl acyltransferase that mediates palmitoylation of proteins such as AMFR, CALX, ITPR1 and TFRC. Palmitoylates calnexin (CALX), which is required for its association with the ribosome-translocon complex and efficient folding of glycosylated proteins. Mediates palmitoylation of AMFR, promoting AMFR distribution to the peripheral endoplasmic reticulum. Together with SELENOK, palmitoylates ITPR1 in immune cells, leading to regulate ITPR1 stability and function. Stearoyltransferase that mediates stearoylation of TFRC to inhibit TFRC-mediated activation of the JNK pathway and mitochondrial fragmentation. The sequence is that of Palmitoyltransferase ZDHHC6 from Mus musculus (Mouse).